The sequence spans 440 residues: C4-dicarboxylate transport protein (440 aa).

Transmembrane regions (helical) follow at residues 15 to 35, 46 to 66, 78 to 98, 146 to 166, 190 to 210, 224 to 244, 291 to 311, 332 to 352, and 354 to 374; these read VLVA…TGVA, LIKM…IAGM, YALL…LVVV, AFAN…GFAL, IINM…AFTI, LMAC…GGIC, VVGL…SIYL, ITLL…TGSG, and IVLA…LALI. The tract at residues 420-440 is disordered; that stretch reads GAPLVDTRPTDDLGVAEGPAR.

This sequence belongs to the dicarboxylate/amino acid:cation symporter (DAACS) (TC 2.A.23) family.

It localises to the cell inner membrane. Responsible for the transport of dicarboxylates such as succinate, fumarate, and malate from the periplasm across the membrane. In Pseudomonas putida (strain ATCC 700007 / DSM 6899 / JCM 31910 / BCRC 17059 / LMG 24140 / F1), this protein is C4-dicarboxylate transport protein.